The chain runs to 367 residues: MQLLTLPPSPALATSIRATAQVFEDPKSQALLAHLQQVAPSEASVLIIGETGTGKELVARHIHNLSNRRNRPFIAVNCGAFSESLVEAELFGHEKGAFTGALSAKAGWFEEADGGTLFLDEIGDLPMAIQVKLLRVLQEREVVRLGSRKSIPIDVRVLAATNVQLEKAINAGHFREDLYYRLNVVNLELSPLRDRPGDILPLTRHFIEAYSQRLGYGRVTISPGAEHKLRGYSWPGNIRELENVIHHTLLICRNGVIERDDLRLSNLRIDRPDDQHATADDSPEALLERAFQKLFEQQAGALHEKVEDALLRSAYRFCHYNQVHTASLLGLSRNVTRTRLIKIGELAVNKRRPTENLQGERLIQLSI.

Residues 21–250 (QVFEDPKSQA…LENVIHHTLL (230 aa)) enclose the Sigma-54 factor interaction domain. ATP is bound by residues 49–56 (GETGTGKE) and 112–121 (ADGGTLFLDE).

Involved in the dimethyl sulfide degradation pathway. Activates the expression of sfnG and sfnF. The protein is Sigma54-dependent transcriptional regulator SfnR of Pseudomonas fluorescens (strain Pf0-1).